A 569-amino-acid chain; its full sequence is CUE domain-containing protein 5 (569 aa).

The CUE domain maps to 17–60 (MAEKARATLKEAFPNTDDAIIRAVLAASGYKLEPAFNALLGLSD). Disordered regions lie at residues 67 to 139 (MEQA…DDYS), 175 to 275 (DGEE…SSSA), and 311 to 569 (EELE…GKET). Positions 79-100 (AAHDDPVQRQLEEDERCARELA) are enriched in basic and acidic residues. Positions 104 to 113 (NSHRPERRRK) are enriched in basic residues. Residues 234 to 249 (SDPHMLNEKDFERLRL) are compositionally biased toward basic and acidic residues. Over residues 250-274 (ESSSSPMMRRSSLNSNRRSVESSSS) the composition is skewed to low complexity. Basic and acidic residues predominate over residues 329–340 (VVVEKKPDESRK). Residues 347–364 (ETVSEEQMGSSNAKSKVL) are compositionally biased toward polar residues. Composition is skewed to basic and acidic residues over residues 367–381 (EPKDSTSVEAEKTET), 399–500 (ISEK…KETD), and 507–558 (KEEK…KIEE).

It is found in the cytoplasm. This chain is CUE domain-containing protein 5, found in Schizosaccharomyces pombe (strain 972 / ATCC 24843) (Fission yeast).